Here is a 350-residue protein sequence, read N- to C-terminus: MFEKTTWIKLPRNVLVGHGVLDDLGEAVGELYLTGRPLIVTSPTPNDIAGDRVRAQFDDPATAVVEEASFEAVEKLTETAEAVDPGYLIALGGGKPIDIAKMAADHLGVGFVSVPTVASHDGIVSGRSSIPEGDTRHSVAADPPLAVVADTTLIADAPWRLTTAGCADIISNYTAVKDWRLARRLRNVEYSEYAGALSEMTAELLVENADMIRPGLEESAWVVVKALVSSGVAMSIAGSSRPASGAEHLISHQLDRSAPGRALHGHQVGVASIMTEYLHSGENGEWSAIRDALAALDAPTTAAELGLDDAELIAALTSAHEIRDRYTILQGGINEAAAIEVATATGVIDG.

Residues 94–98 (GKPID) and 116–119 (TVAS) contribute to the NAD(+) site. Aspartate 121 is a substrate binding site. Serine 125 contacts NAD(+). Aspartate 168 contacts substrate. The Zn(2+) site is built by aspartate 168 and histidine 248. A substrate-binding site is contributed by histidine 252. Histidine 264 lines the Zn(2+) pocket.

The protein belongs to the glycerol-1-phosphate dehydrogenase family. Zn(2+) is required as a cofactor.

It is found in the cytoplasm. The catalysed reaction is sn-glycerol 1-phosphate + NAD(+) = dihydroxyacetone phosphate + NADH + H(+). It carries out the reaction sn-glycerol 1-phosphate + NADP(+) = dihydroxyacetone phosphate + NADPH + H(+). Its pathway is membrane lipid metabolism; glycerophospholipid metabolism. Catalyzes the NAD(P)H-dependent reduction of dihydroxyacetonephosphate (DHAP or glycerone phosphate) to glycerol 1-phosphate (G1P). The G1P thus generated is used as the glycerophosphate backbone of phospholipids in the cellular membranes of Archaea. This is Glycerol-1-phosphate dehydrogenase [NAD(P)+] from Halorubrum lacusprofundi (strain ATCC 49239 / DSM 5036 / JCM 8891 / ACAM 34).